A 75-amino-acid chain; its full sequence is Acyl carrier protein (75 aa).

Residues 1-75 enclose the Carrier domain; that stretch reads MSVFDKVKSI…DAVNYIKENQ (75 aa). Residue serine 35 is modified to O-(pantetheine 4'-phosphoryl)serine.

This sequence belongs to the acyl carrier protein (ACP) family. Post-translationally, 4'-phosphopantetheine is transferred from CoA to a specific serine of apo-ACP by AcpS. This modification is essential for activity because fatty acids are bound in thioester linkage to the sulfhydryl of the prosthetic group.

Its subcellular location is the cytoplasm. The protein operates within lipid metabolism; fatty acid biosynthesis. In terms of biological role, carrier of the growing fatty acid chain in fatty acid biosynthesis. This Desulfitobacterium hafniense (strain Y51) protein is Acyl carrier protein.